The chain runs to 132 residues: Small ribosomal subunit protein uS8 (132 aa).

This sequence belongs to the universal ribosomal protein uS8 family. In terms of assembly, part of the 30S ribosomal subunit. Contacts proteins S5 and S12.

Its function is as follows. One of the primary rRNA binding proteins, it binds directly to 16S rRNA central domain where it helps coordinate assembly of the platform of the 30S subunit. The chain is Small ribosomal subunit protein uS8 from Chelativorans sp. (strain BNC1).